The sequence spans 191 residues: Thymidine kinase (191 aa).

Residues 15–22 and 88–91 contribute to the ATP site; these read GPMYSGKT and DEAQ. Glutamate 89 (proton acceptor) is an active-site residue. Zn(2+) is bound by residues cysteine 145, cysteine 148, cysteine 183, and cysteine 186.

It belongs to the thymidine kinase family. As to quaternary structure, homotetramer.

It localises to the cytoplasm. It carries out the reaction thymidine + ATP = dTMP + ADP + H(+). This chain is Thymidine kinase, found in Clostridium botulinum (strain Loch Maree / Type A3).